The following is a 285-amino-acid chain: MFNWVKTAMLMAAITALFIVIGGMIGGSRGMTIALLFALGMNFFSYWFSDKMVLRMYNAQEVDENTAPQFYRMVRELATRANLPMPRVYLINEDAPNAFATGRNPEHAAVAATTGILRVLSEREMRGVMAHELAHVKHRDILISTITATMAGAISAIANFAMFFGGRDENGRPVNPIAGIAVALLAPIAGALIQMAISRAREFEADRGGAQISGDPQALASALDKIHRYAAGIPFQAAEAHPATAQMMIMNPLHGGGLQNLFSTHPATEERIARLMEMARTGRFD.

Transmembrane regions (helical) follow at residues T7–G27 and G30–D50. H131 contacts Zn(2+). Residue E132 is part of the active site. H135 contributes to the Zn(2+) binding site. Transmembrane regions (helical) follow at residues I146–G166 and I177–I197. E202 lines the Zn(2+) pocket.

Belongs to the peptidase M48B family. Zn(2+) is required as a cofactor.

The protein localises to the cell inner membrane. This is Protease HtpX homolog from Burkholderia multivorans (strain ATCC 17616 / 249).